A 467-amino-acid polypeptide reads, in one-letter code: Replication factor A 51 kDa subunit (467 aa).

Positions 23-105 (WWIRARVADK…SNVNNDYELT (83 aa)) form a DNA-binding region, OB. The segment at 313–335 (CPTCNKKVTEEGAQGDRFRCEKC) adopts a C4-type zinc-finger fold.

It belongs to the replication factor A protein 1 family. In terms of assembly, component of the heterotrimeric canonical replication protein A complex (RPA). The N-terminus is blocked.

It localises to the nucleus. Functionally, as part of the heterotrimeric replication protein A complex (RPA/RP-A), binds and stabilizes single-stranded DNA intermediates, that form during DNA replication or upon DNA stress. It prevents their reannealing and in parallel, recruits and activates different proteins and complexes involved in DNA metabolism. Thereby, it plays an essential role both in DNA replication and the cellular response to DNA damage. This Crithidia fasciculata protein is Replication factor A 51 kDa subunit (RPA1).